The primary structure comprises 686 residues: Amyloid-beta-like protein (686 aa).

The first 21 residues, 1–21, serve as a signal peptide directing secretion; sequence MTVGKLMIGLLIPILVATVYA. Over 22–621 the chain is Extracellular; sequence EGSPAGSKRH…VERSASSVFQ (600 aa). Positions 32–125 are GFLD subdomain; the sequence is EKFIPMVAFS…PYHCIDGEFH (94 aa). Residues 32–197 enclose the E1 domain; that stretch reads EKFIPMVAFS…TGVEFVCCPN (166 aa). Disulfide bonds link C42/C65, C76/C119, C101/C108, C135/C195, C146/C182, and C160/C194. A glycan (N-linked (GlcNAc...) asparagine) is linked at N84. Residues 133–197 are cuBD subdomain; sequence HDCQFSHVNS…TGVEFVCCPN (65 aa). N-linked (GlcNAc...) asparagine glycosylation is present at N201. The tract at residues 201–245 is disordered; that stretch reads NKTDVQKTKEDEDDDDDEDDAYEDDYSEESDEKDEEEPSSQDPYF. Acidic residues predominate over residues 211 to 239; sequence DEDDDDDEDDAYEDDYSEESDEKDEEEPS. The E2 domain maps to 240–440; sequence SQDPYFKIAN…KYVRPIAVTY (201 aa). N-linked (GlcNAc...) asparagine glycosylation occurs at N249. Heparin contacts are provided by residues 252–255 and H382; that span reads NEHD. N417 is a glycosylation site (N-linked (GlcNAc...) asparagine). Disordered stretches follow at residues 479-526 and 550-585; these read PTTT…DMKK and KLVETSVQTDDEDDDEDSSSSTSSESDEDEDKNIKE. Residues 500 to 516 show a composition bias toward acidic residues; sequence SDSEEEADEYYEDEDDE. The span at 517–526 shows a compositional bias: basic and acidic residues; it reads QVKKTPDMKK. Residues 558-567 are compositionally biased toward acidic residues; the sequence is TDDEDDDEDS. The chain crosses the membrane as a helical span at residues 622–642; that stretch reads PYVLASAMFITAICIIAFAIT. Topologically, residues 643-686 are cytoplasmic; it reads NARRRRAMRGFIEVDVYTPEERHVAGMQVNGYENPTYSFFDSKA. The YENPXY motif signature appears at 674–679; the sequence is YENPTY.

It belongs to the APP family. As to quaternary structure, interacts (via cytoplasmic domain) with feh-1 (via PID 2 domain). Extracellular region is proteolytically cleaved. As to expression, expressed in the head, pharynx, spermatheca, uterus, vulva, tail and ventral neurons. Specifically expressed in nerve ring interneurons, the ventral cord, socket and amphids in the head, with strong expression in junctional cells, including the pharyngeal intestinal valve and uterine seam junction, and the excretory cell and weak expression in epidermal epithelial cells, including hyp7 cells, vulval cells, rectal valve cells, pharyngeal arcade cells and the tail hypodermis.

The protein resides in the membrane. The protein localises to the early endosome. In terms of biological role, required for normal developmental progression throughout all life stages. Specifically required for the molt stage during all larval transitions and morphogenesis. Acts with heterochronic genes, including members of the let-7 family, to regulate larval stage to adult transition. Acts synergistically with acn-1 in let-7 regulated postembryonic cell division of hypodermal seam cells. Acts in multiple pathways to influence daf-12 and daf-16 activity to in turn regulate physiological and reproductive processes such as body size and egg-laying. May play a role in neurotransmission. This chain is Amyloid-beta-like protein, found in Caenorhabditis elegans.